The primary structure comprises 344 residues: uncharacterized protein (344 aa).

Residues 304–344 are disordered; sequence AVPAPTPRRPLDSVLQIRQTPEKGRNASDRNARETGWFSPP. Residues 323–336 are compositionally biased toward basic and acidic residues; it reads TPEKGRNASDRNAR.

This is an uncharacterized protein from Mycobacterium tuberculosis (strain CDC 1551 / Oshkosh).